The primary structure comprises 770 residues: Amyloid-beta precursor protein (770 aa).

Positions methionine 1–alanine 17 are cleaved as a signal peptide. Residues leucine 18–alanine 701 lie on the Extracellular side of the membrane. Residues leucine 28–valine 123 form a GFLD subdomain region. Residues leucine 28–leucine 189 form the E1 domain. 6 disulfide bridges follow: cysteine 38-cysteine 62, cysteine 73-cysteine 117, cysteine 98-cysteine 105, cysteine 133-cysteine 187, cysteine 144-cysteine 174, and cysteine 158-cysteine 186. Asparagine 96–histidine 110 is a heparin binding site. Residues aspartate 131–leucine 189 form a cuBD subdomain region. 3 residues coordinate Cu(2+): histidine 147, histidine 151, and tyrosine 168. Residues glycine 181–proline 188 form a zinc-binding region. Glutamate 183, cysteine 186, and cysteine 187 together coordinate Zn(2+). Over residues aspartate 194 to aspartate 207 the composition is skewed to acidic residues. The disordered stretch occupies residues aspartate 194 to glutamate 284. At serine 198 the chain carries Phosphoserine; by CK2. Serine 206 bears the Phosphoserine; by CK1 mark. Residues tyrosine 217 and tyrosine 262 each carry the sulfotyrosine modification. The span at valine 228 to glutamate 264 shows a compositional bias: acidic residues. The span at arginine 268 to glutamate 281 shows a compositional bias: low complexity. 3 disulfides stabilise this stretch: cysteine 291/cysteine 341, cysteine 300/cysteine 324, and cysteine 316/cysteine 337. A BPTI/Kunitz inhibitor domain is found at cysteine 291–cysteine 341. Sulfotyrosine is present on tyrosine 336. An OX-2 motif is present at residues valine 344–proline 365. Residues alanine 374–leucine 565 form the E2 domain. Residues phenylalanine 391–leucine 423 are heparin-binding. Serine 441 is modified (phosphoserine). The interval phenylalanine 491 to lysine 522 is heparin-binding. The residue at position 497 (tyrosine 497) is a Phosphotyrosine. A collagen-binding region spans residues alanine 523–arginine 540. N-linked (GlcNAc...) asparagine glycosylation is found at asparagine 542 and asparagine 571. Histidine 677, tyrosine 681, histidine 684, and histidine 685 together coordinate Cu(2+). 4 residues coordinate Zn(2+): histidine 677, tyrosine 681, histidine 684, and histidine 685. The segment at valine 695–methionine 722 is interaction with PSEN1. Residues isoleucine 702 to methionine 722 form a helical membrane-spanning segment. At leucine 723 to asparagine 770 the chain is on the cytoplasmic side. The Basolateral sorting signal signature appears at lysine 724–glycine 734. Threonine 729 bears the Phosphothreonine mark. Residue serine 730 is modified to Phosphoserine; by APP-kinase I. Residues histidine 732–lysine 751 form an interaction with G(o)-alpha region. Position 743 is a phosphothreonine; by CDK5 and MAPK10 (threonine 743). The interval glycine 756 to asparagine 770 is required for the interaction with KIF5B and for anterograde transport in axons. Tyrosine 757 is subject to Phosphotyrosine; by ABL1. The YENPXY motif; contains endocytosis signal motif lies at tyrosine 757–tyrosine 762. Residue lysine 763 forms a Glycyl lysine isopeptide (Lys-Gly) (interchain with G-Cter in ubiquitin) linkage.

The protein belongs to the APP family. Binds, via its C-terminus, to the PID domain of several cytoplasmic proteins, including APBB family members, the APBA family, MAPK8IP1, SHC1 and NUMB and DAB1. Binding to DAB1 inhibits its serine phosphorylation. Interacts (via NPXY motif) with DAB2 (via PID domain); the interaction is impaired by tyrosine phosphorylation of the NPXY motif. Also interacts with GPCR-like protein BPP, APPBP1, IB1, KNS2 (via its TPR domains), APPBP2 (via BaSS) and DDB1. In vitro, it binds MAPT via the MT-binding domains. Associates with microtubules in the presence of ATP and in a kinesin-dependent manner. Interacts, through a C-terminal domain, with GNAO1. Amyloid-beta protein 42 binds CHRNA7 in hippocampal neurons. Amyloid-beta associates with HADH2. Interacts with CPEB1, ANKS1B and AGER. Interacts with ITM2B. Interacts with ITM2C. Interacts with IDE. Can form homodimers; dimerization is enhanced in the presence of Cu(2+) ions. Can form homodimers; this is promoted by heparin binding. Amyloid-beta protein 40 interacts with S100A9. CTF-alpha product of APP interacts with GSAP. Isoform APP695 interacts with SORL1 (via N-terminal ectodomain); this interaction retains APP in the trans-Golgi network and reduces processing into soluble APP-alpha and amyloid-beta peptides. Isoform APP770 interacts with SORL1. The C99 fragment also interacts with SORL1. Interacts with PLD3. Interacts with VDAC1. Interacts with NSG1; could regulate APP processing. Amyloid-beta protein 42 interacts with FPR2. Interacts (via transmembrane region) with PSEN1; the interaction is direct. Interacts with LRRK2. Interacts (via cytoplasmic domain) with KIF5B. Interacts (via C-terminus) with APBB2/FE65L1 (via C-terminus). Interacts (via intracellular domain) with APBB3. Proteolytically processed under normal cellular conditions. Cleavage either by alpha-secretase, beta-secretase or theta-secretase leads to generation and extracellular release of soluble APP peptides, S-APP-alpha and S-APP-beta, and the retention of corresponding membrane-anchored C-terminal fragments, C80, C83 and C99. Subsequent processing of C80 and C83 by gamma-secretase yields P3 peptides. This is the major secretory pathway and is non-amyloidogenic. Alternatively, presenilin/nicastrin-mediated gamma-secretase processing of C99 releases the amyloid-beta proteins, amyloid-beta protein 40 and amyloid-beta protein 42, major components of amyloid plaques, and the cytotoxic C-terminal fragments, gamma-CTF(50), gamma-CTF(57) and gamma-CTF(59). PSEN1 cleavage is more efficient with C83 than with C99 as substrate (in vitro). Amyloid-beta protein 40 and Amyloid-beta protein 42 are cleaved by ACE. Many other minor amyloid-beta peptides, amyloid-beta 1-X peptides, are found in cerebral spinal fluid (CSF) including the amyloid-beta X-15 peptides, produced from the cleavage by alpha-secretase. Post-translationally, proteolytically cleaved by caspases during neuronal apoptosis. Cleavage at Asp-739 by either caspase-3, -8 or -9 results in the production of the neurotoxic C31 peptide and the increased production of amyloid-beta peptides. In terms of processing, N- and O-glycosylated. Phosphorylation in the C-terminal on tyrosine, threonine and serine residues is neuron-specific. Phosphorylation can affect APP processing, neuronal differentiation and interaction with other proteins. Phosphorylated on Thr-743 in neuronal cells by Cdc5 kinase and Mapk10, in dividing cells by Cdc2 kinase in a cell-cycle dependent manner with maximal levels at the G2/M phase and, in vitro, by GSK-3-beta. The Thr-743 phosphorylated form causes a conformational change which reduces binding of Fe65 family members. In dopaminergic (DA) neurons, phosphorylation on Thr-743 by LRKK2 promotes the production and the nuclear translocation of the APP intracellular domain (AICD) which induces DA neuron apoptosis. Phosphorylation on Tyr-757 is required for SHC binding. Phosphorylated in the extracellular domain by casein kinases on both soluble and membrane-bound APP. This phosphorylation is inhibited by heparin. Post-translationally, trophic-factor deprivation triggers the cleavage of surface APP by beta-secretase to release sAPP-beta which is further cleaved to release an N-terminal fragment of APP (N-APP). In terms of processing, amyloid-beta peptides are degraded by IDE. Sulfated on tyrosine residues.

It is found in the cell membrane. The protein resides in the membrane. It localises to the perikaryon. Its subcellular location is the cell projection. The protein localises to the growth cone. It is found in the clathrin-coated pit. The protein resides in the early endosome. It localises to the cytoplasmic vesicle. Its subcellular location is the endoplasmic reticulum. The protein localises to the golgi apparatus. It is found in the secreted. The protein resides in the cell surface. It localises to the nucleus. Its subcellular location is the cytoplasm. In terms of biological role, functions as a cell surface receptor and performs physiological functions on the surface of neurons relevant to neurite growth, neuronal adhesion and axonogenesis. Interaction between APP molecules on neighboring cells promotes synaptogenesis. Involved in cell mobility and transcription regulation through protein-protein interactions. Can promote transcription activation through binding to APBB1-KAT5 and inhibit Notch signaling through interaction with Numb. Couples to apoptosis-inducing pathways such as those mediated by G(o) and JIP. Inhibits G(o)-alpha ATPase activity. Acts as a kinesin I membrane receptor, mediating the axonal transport of beta-secretase and presenilin 1. By acting as a kinesin I membrane receptor, plays a role in axonal anterograde transport of cargo towards synapses in axons. May be involved in copper homeostasis/oxidative stress through copper ion reduction. In vitro, copper-metallated APP induces neuronal death directly or is potentiated through Cu(2+)-mediated low-density lipoprotein oxidation. Can regulate neurite outgrowth through binding to components of the extracellular matrix such as heparin and collagen I and IV. Induces a AGER-dependent pathway that involves activation of p38 MAPK, resulting in internalization of amyloid-beta peptide and mitochondrial dysfunction in cultured cortical neurons. Provides Cu(2+) ions for GPC1 which are required for release of nitric oxide (NO) and subsequent degradation of the heparan sulfate chains on GPC1. Functionally, amyloid-beta peptides are lipophilic metal chelators with metal-reducing activity. Binds transient metals such as copper, zinc and iron. Its function is as follows. The gamma-CTF peptides as well as the caspase-cleaved peptides, including C31, are potent enhancers of neuronal apoptosis. In Macaca fascicularis (Crab-eating macaque), this protein is Amyloid-beta precursor protein.